Reading from the N-terminus, the 125-residue chain is Large ribosomal subunit protein bL12 (125 aa).

This sequence belongs to the bacterial ribosomal protein bL12 family. In terms of assembly, homodimer. Part of the ribosomal stalk of the 50S ribosomal subunit. Forms a multimeric L10(L12)X complex, where L10 forms an elongated spine to which 2 to 4 L12 dimers bind in a sequential fashion. Binds GTP-bound translation factors.

Forms part of the ribosomal stalk which helps the ribosome interact with GTP-bound translation factors. Is thus essential for accurate translation. This chain is Large ribosomal subunit protein bL12, found in Polaromonas naphthalenivorans (strain CJ2).